A 170-amino-acid polypeptide reads, in one-letter code: Adenine phosphoribosyltransferase (170 aa).

It belongs to the purine/pyrimidine phosphoribosyltransferase family. As to quaternary structure, homodimer.

The protein resides in the cytoplasm. The enzyme catalyses AMP + diphosphate = 5-phospho-alpha-D-ribose 1-diphosphate + adenine. The protein operates within purine metabolism; AMP biosynthesis via salvage pathway; AMP from adenine: step 1/1. In terms of biological role, catalyzes a salvage reaction resulting in the formation of AMP, that is energically less costly than de novo synthesis. This is Adenine phosphoribosyltransferase from Streptococcus pneumoniae (strain Taiwan19F-14).